We begin with the raw amino-acid sequence, 588 residues long: Vesicular glutamate transporter 3 (588 aa).

Over methionine 1 to tyrosine 76 the chain is Cytoplasmic. A helical transmembrane segment spans residues isoleucine 77–glycine 97. Residues valine 98–glycine 130 lie on the Vesicular side of the membrane. Asparagine 106 is a glycosylation site (N-linked (GlcNAc...) asparagine). Residues leucine 131 to serine 151 traverse the membrane as a helical segment. Residues asparagine 152–lysine 153 lie on the Cytoplasmic side of the membrane. A helical membrane pass occupies residues phenylalanine 154–isoleucine 174. At proline 175 to tyrosine 182 the chain is on the vesicular side. The helical transmembrane segment at glycine 183 to cysteine 203 threads the bilayer. At histidine 204–threonine 221 the chain is on the cytoplasmic side. A helical transmembrane segment spans residues threonine 222–valine 242. At glutamine 243–serine 249 the chain is on the vesicular side. Residues valine 250–tyrosine 270 traverse the membrane as a helical segment. The Cytoplasmic portion of the chain corresponds to glutamate 271 to leucine 314. The helical transmembrane segment at proline 315–isoleucine 335 threads the bilayer. The Vesicular segment spans residues serine 336 to glycine 353. A helical transmembrane segment spans residues leucine 354 to alanine 374. The Cytoplasmic portion of the chain corresponds to aspartate 375–lysine 390. A helical membrane pass occupies residues isoleucine 391–histidine 411. Residues threonine 412 to lysine 413 lie on the Vesicular side of the membrane. Residues glycine 414 to phenylalanine 434 form a helical membrane-spanning segment. Topologically, residues asparagine 435 to serine 447 are cytoplasmic. A helical membrane pass occupies residues isoleucine 448 to valine 468. The Vesicular portion of the chain corresponds to glycine 469–glutamine 481. Residues asparagine 482–alanine 502 traverse the membrane as a helical segment. The Cytoplasmic segment spans residues serine 503 to serine 585. The disordered stretch occupies residues phenylalanine 539–serine 588. Basic and acidic residues predominate over residues glutamine 558–alanine 569. Positions phenylalanine 570–serine 588 are enriched in acidic residues.

Belongs to the major facilitator superfamily. Sodium/anion cotransporter family. VGLUT subfamily. In terms of tissue distribution, expressed in brain, kidney and liver. Expressed within the amygdala, brainstem, cerberal cortex, dorsal root ganglia, dorsal spinal cord, hippocampus, hypothalamus, retina, striatum and ventral spinal cord. Expressed within neurons of the caudate-putamen, olfactory tubercle, nucleus accumbens, hippocampus, interpeduncular nucleus and dorsal and medial raphe nuclei. Expressed in inner hair cells of the ear. Expressed at synaptic terminals within the lateral superior olive (LSO), a nucleus of the mammalian sound localization system, and in the medial nucleus of the trapezoid body (MNTB), which provides inhibitory input to the LSO.

The protein localises to the cytoplasmic vesicle. It localises to the secretory vesicle. Its subcellular location is the synaptic vesicle membrane. The protein resides in the cell membrane. It is found in the synapse. The protein localises to the synaptosome. The enzyme catalyses L-glutamate(out) = L-glutamate(in). It carries out the reaction chloride(in) = chloride(out). The catalysed reaction is 3 Na(+)(out) + phosphate(out) = 3 Na(+)(in) + phosphate(in). With respect to regulation, the L-glutamate uniporter activity exhibits a biphasic dependence on chloride concentration. Chloride channel activity is allosterically activated by lumenal H(+) and Cl(-) leading to synaptic vesicles acidification. The glutamate transport activity is allosterically activated by lumenal H(+) and Cl(-), preventing non-vesicular L-glutamate release. Multifunctional transporter that transports L-glutamate as well as multiple ions such as chloride, sodium and phosphate. At the synaptic vesicle membrane, mainly functions as an uniporter that mediates the uptake of L-glutamate into synaptic vesicles at presynaptic nerve terminals of excitatory neural cells. The L-glutamate uniporter activity is electrogenic and is driven by the proton electrochemical gradient, mainly by the electrical gradient established by the vacuolar H(+)-ATPase across the synaptic vesicle membrane. In addition, functions as a chloride channel that allows a chloride permeation through the synaptic vesicle membrane that affects the proton electrochemical gradient and promotes synaptic vesicles acidification. At the plasma membrane, following exocytosis, functions as a symporter of Na(+) and phosphate from the extracellular space to the cytoplasm allowing synaptic phosphate homeostasis regulation. The symporter activity is electrogenic. Moreover, operates synergistically with SLC18A3/VACHT under a constant H(+) gradient, thereby allowing striatal vesicular acetylcholine uptake. The protein is Vesicular glutamate transporter 3 of Rattus norvegicus (Rat).